The sequence spans 250 residues: Agamous-like MADS-box protein AGL8 homolog (250 aa).

An MADS-box domain is found at 3-57; that stretch reads RGRVQLKRIENKINRQVTFSKRRSGLLKKAHEISVLCDAEVGLIVFSTKGKLFEY. Residues 88–178 form the K-box domain; the sequence is PGSWTLEHAK…SKKVKEREKE (91 aa).

In terms of tissue distribution, abundant in vegetative organs.

The protein localises to the nucleus. Probable transcription factor. This chain is Agamous-like MADS-box protein AGL8 homolog, found in Solanum tuberosum (Potato).